The sequence spans 242 residues: Uridylate kinase (242 aa).

16-19 (KVSG) is an ATP binding site. Glycine 58 serves as a coordination point for UMP. Residues glycine 59 and arginine 63 each contribute to the ATP site. UMP is bound by residues aspartate 78 and 139–146 (TGNPFCTT). Residues threonine 166, glutamine 167, tyrosine 172, and aspartate 175 each coordinate ATP.

Belongs to the UMP kinase family. As to quaternary structure, homohexamer.

The protein localises to the cytoplasm. It carries out the reaction UMP + ATP = UDP + ADP. The protein operates within pyrimidine metabolism; CTP biosynthesis via de novo pathway; UDP from UMP (UMPK route): step 1/1. With respect to regulation, inhibited by UTP. Catalyzes the reversible phosphorylation of UMP to UDP. The protein is Uridylate kinase of Rickettsia felis (strain ATCC VR-1525 / URRWXCal2) (Rickettsia azadi).